Reading from the N-terminus, the 518-residue chain is MPNIDLPTLEAFVHAIPQNYKGPGGAVAVVRNGEIVLRHAWGFADLAARKAMTPETRMPICSVSKQFTCAVLLDCIGEPEMLDSALAAYLDQFGDGRPAVRDLCNNQSGLRDYWALTVLCGAAPEGIFLPDQAQNLLRRLKTTHFAPGTHYSYCNGNFRILADLIEQHTGRSLADLLAERIFAPAAMKTAELIPDTALFNECTGYEGDTVHGFLPAINRIHWLGDAGICASLDDMIAWEQFIDRTRHDENGLYRRLSSPQTFADGAPAPYGFGLKFEETGGKRLTGHGGALRGWRCQRWHCADERISTIVMFNFEGNASDAALKMMNAALGIPPAKPVRAQANPGWFGSWLNPETGLVLSLEDAGGGRMKARFGTGPEIMDISGENEAQSSMTTLRRDGDMIHLARKDENLHLAMHRLKGEARQDIAGRYRSDELEADLLLVSEGGAIYGAFEGFLGKSDMYPLYAAGPDVWLLPVQRSMDAPSPGEWKLVFHRDAAGRITGVTVGCWLARGVEYKRL.

Ser62 acts as the Nucleophile in catalysis. Lys65 acts as the Proton donor/acceptor in catalysis. Residues 477–487 form an important for specificity region; it reads QRSMDAPSPGE. Residue Asp481 coordinates substrate.

This sequence belongs to the peptidase S12 family. As to quaternary structure, homodimer.

The catalysed reaction is Release of an N-terminal D-amino acid from a peptide, Xaa-|-Yaa-, in which Xaa is preferably D-Ala, D-Ser or D-Thr. D-amino acid amides and methyl esters also are hydrolyzed, as is glycine amide.. Inhibited by beta-lactam compounds such as 6-aminopenicillic acid, 7-aminocephalosporanic acid, benzylpenicillin and ampicillin. Inhibited by p-chloromercuribenzoate. Functionally, hydrolyzes N-terminal residues in D-amino acid-containing peptides. The protein is D-aminopeptidase of Brucella ovis (strain ATCC 25840 / 63/290 / NCTC 10512).